The chain runs to 512 residues: MEEETETRVFLSNEQHQEEEEEEEEEPSLPRSMVISLYLGYFLARWGARTWEFSVALYMIYLWPNSLFLTAMYGVVESGSATLFGPIVGQMIDGMSYVKVLRLWLVTQNLSFIVAGGAVVALLVVPDLKSQNFPVFATLVVLTNLSGAIGVLSTLAGTVLIERDWVVVMSEGHSPAVLTRMNSVIRGIDLSSKLLSPVITGLIISFVSLRASAITFAAWATITVWIEYWLFISVYNGVPAIVQSDERRSLRSSQSQAEETDSASSFYVPLLHEEESYRNTQSRSRILRILERISESSFVSAWRNYLNQEIVLPGVSLALLFFTVLSFGTLMTATLEWKGIPTYIIGIGRGISAGVGLAATVLYPLMQSRISPLRTGVWSFWSQWTCLLVCVGSIWVEKEKIASYMLMAGVAASRLGLWMFDLAVIQQMQDLVPESDRCVVGGVQNSLQSALDLMANLLGIIVSNPKDFWMLTLISFATVSLAGILYTIHLYRIRKHLFHLEKIPLLNNFFAS.

The segment at 1 to 28 (MEEETETRVFLSNEQHQEEEEEEEEEPS) is disordered. Residues 17–27 (QEEEEEEEEEP) show a composition bias toward acidic residues. 11 helical membrane-spanning segments follow: residues 55-75 (VALY…MYGV), 105-125 (LVTQ…LLVV), 133-153 (FPVF…GVLS), 187-207 (GIDL…ISFV), 214-234 (ITFA…FISV), 310-330 (IVLP…FGTL), 343-363 (YIIG…TVLY), 376-396 (GVWS…SIWV), 405-425 (MLMA…LAVI), 442-462 (GVQN…GIIV), and 468-488 (FWML…LYTI).

It belongs to the ferroportin (FP) (TC 2.A.100) family. SLC40A subfamily.

It is found in the vacuole membrane. In terms of biological role, vacuolar transporter that is involved in the transport of excess nickel into the vacuole under iron deficiency, increasing cellular tolerance to nickel under iron deficiency stress response. The chain is Solute carrier family 40 member 2 (IREG2) from Arabidopsis thaliana (Mouse-ear cress).